Reading from the N-terminus, the 300-residue chain is MSTVGFDAPARLGTVLTAMVTPFAADGSLDTAAAARLANHLVDSGCDGLVVSGTTGESPTTTDDEKRELLRVVLEAVGDRARVIAGAGTYDTAHSVRLAKACAAEGAHGLLVVTPYYSKPPQRGLIAHFTAVADATELPVLLYDIPGRSVVPIESSTIRALASHPNIVGVKDAKADLHAGGQIIAETGLAYYSGDDALNLPWLAMGATGFISVISHVAANQLRELLSAFTSGDIATARKINATVTPLCDAMARLGGVTMSKAGLRLQGIDVGDPRLPQVPATPEQIEALTADMRAASVLR.

Position 55 (threonine 55) interacts with pyruvate. Catalysis depends on tyrosine 143, which acts as the Proton donor/acceptor. Residue lysine 171 is the Schiff-base intermediate with substrate of the active site. Isoleucine 211 contacts pyruvate.

This sequence belongs to the DapA family. In terms of assembly, homotetramer; dimer of dimers.

Its subcellular location is the cytoplasm. It catalyses the reaction L-aspartate 4-semialdehyde + pyruvate = (2S,4S)-4-hydroxy-2,3,4,5-tetrahydrodipicolinate + H2O + H(+). Its pathway is amino-acid biosynthesis; L-lysine biosynthesis via DAP pathway; (S)-tetrahydrodipicolinate from L-aspartate: step 3/4. In terms of biological role, catalyzes the condensation of (S)-aspartate-beta-semialdehyde [(S)-ASA] and pyruvate to 4-hydroxy-tetrahydrodipicolinate (HTPA). This is 4-hydroxy-tetrahydrodipicolinate synthase from Mycolicibacterium paratuberculosis (strain ATCC BAA-968 / K-10) (Mycobacterium paratuberculosis).